Here is a 393-residue protein sequence, read N- to C-terminus: ATP phosphoribosyltransferase regulatory subunit (393 aa).

The protein belongs to the class-II aminoacyl-tRNA synthetase family. HisZ subfamily. As to quaternary structure, heteromultimer composed of HisG and HisZ subunits.

It is found in the cytoplasm. It participates in amino-acid biosynthesis; L-histidine biosynthesis; L-histidine from 5-phospho-alpha-D-ribose 1-diphosphate: step 1/9. Required for the first step of histidine biosynthesis. May allow the feedback regulation of ATP phosphoribosyltransferase activity by histidine. In Marinobacter nauticus (strain ATCC 700491 / DSM 11845 / VT8) (Marinobacter aquaeolei), this protein is ATP phosphoribosyltransferase regulatory subunit.